We begin with the raw amino-acid sequence, 200 residues long: Recombination protein RecR (200 aa).

Residues 57–72 (CRQCRTLTEQELCPQC) form a C4-type zinc finger. The Toprim domain occupies 80–175 (TQLCVVEGPT…VASRIAHGVP (96 aa)).

Belongs to the RecR family.

In terms of biological role, may play a role in DNA repair. It seems to be involved in an RecBC-independent recombinational process of DNA repair. It may act with RecF and RecO. The polypeptide is Recombination protein RecR (Pseudomonas putida (strain ATCC 700007 / DSM 6899 / JCM 31910 / BCRC 17059 / LMG 24140 / F1)).